The chain runs to 524 residues: Beta-glucosidase 21 (524 aa).

The signal sequence occupies residues 1 to 24; it reads MALQKFPLMGLLLLLTILVSVTTA. A beta-D-glucoside is bound at residue Q55. Residue N61 is glycosylated (N-linked (GlcNAc...) asparagine). Residues H158 and 203–204 contribute to the a beta-D-glucoside site; that span reads NE. The active-site Proton donor is the E204. Cysteines 223 and 230 form a disulfide. Residues Y346, E418, W468, 475-476, and F484 contribute to the a beta-D-glucoside site; that span reads EW. E418 functions as the Nucleophile in the catalytic mechanism. Residue N494 is glycosylated (N-linked (GlcNAc...) asparagine). The Prevents secretion from ER signature appears at 521–524; sequence RDEL.

It belongs to the glycosyl hydrolase 1 family. Component of the PYK10 complex, at least composed of PYK10/BGLU23, BGLU21, BGLU22, JAL22, JAL23, PBP1/JAL30, PBP2/JAL31, JAL32, JAL33, JAL34, JAL35, GLL22 and GLL23. In terms of tissue distribution, expressed exclusively in roots.

It is found in the endoplasmic reticulum lumen. It carries out the reaction Hydrolysis of terminal, non-reducing beta-D-glucosyl residues with release of beta-D-glucose.. With respect to regulation, activated upon binding to PBP1 or PBP2. Beta-D-glucosidase active on scopolin &gt;&gt; esculin &gt;&gt; 4-MU-glucoside &gt; DIMBOA-glucoside. No activity with pNP-glucoside, oNP-glucoside and sinigrin as substrates. This Arabidopsis thaliana (Mouse-ear cress) protein is Beta-glucosidase 21.